We begin with the raw amino-acid sequence, 35 residues long: MEALVYTFLLVSTLGIIFFAIFFREPPKLPDRGGK.

Residues 3-23 form a helical membrane-spanning segment; that stretch reads ALVYTFLLVSTLGIIFFAIFF.

This sequence belongs to the PsbT family. PSII is composed of 1 copy each of membrane proteins PsbA, PsbB, PsbC, PsbD, PsbE, PsbF, PsbH, PsbI, PsbJ, PsbK, PsbL, PsbM, PsbT, PsbY, PsbZ, Psb30/Ycf12, at least 3 peripheral proteins of the oxygen-evolving complex and a large number of cofactors. It forms dimeric complexes.

It is found in the plastid. It localises to the chloroplast thylakoid membrane. Found at the monomer-monomer interface of the photosystem II (PS II) dimer, plays a role in assembly and dimerization of PSII. PSII is a light-driven water plastoquinone oxidoreductase, using light energy to abstract electrons from H(2)O, generating a proton gradient subsequently used for ATP formation. In Metasequoia glyptostroboides (Dawn redwood), this protein is Photosystem II reaction center protein T.